The sequence spans 312 residues: Olfactory receptor 7D4 (312 aa).

At 1-25 the chain is on the extracellular side; it reads MEAENLTELSKFLLLGLSDDPELQP. An N-linked (GlcNAc...) asparagine glycan is attached at Asn5. Residues 26–46 traverse the membrane as a helical segment; the sequence is VLFGLFLSMYLVTVLGNLLII. At 47 to 54 the chain is on the cytoplasmic side; that stretch reads LAVSSDSH. A helical transmembrane segment spans residues 55–75; that stretch reads LHTPMYFFLSNLSFVDICFIS. The Extracellular segment spans residues 76–99; sequence TTVPKMLVSIQARSKDISYMGCLT. An intrachain disulfide couples Cys97 to Cys189. The chain crosses the membrane as a helical span at residues 100 to 120; it reads QVYFLMMFAGMDTFLLAVMAY. Residues 121–139 are Cytoplasmic-facing; the sequence is DRFVAICHPLHYTVIMNPC. Residues 140-160 form a helical membrane-spanning segment; that stretch reads LCGLLVLASWFIIFWFSLVHI. The Extracellular segment spans residues 161 to 197; the sequence is LLMKRLTFSTGTEIPHFFCEPAQVLKVACSNTLLNNI. Residues 198–217 traverse the membrane as a helical segment; the sequence is VLYVATALLGVFPVAGILFS. At 218–237 the chain is on the cytoplasmic side; sequence YSQIVSSLMGMSSTKGKYKA. The chain crosses the membrane as a helical span at residues 238–258; the sequence is FSTCGSHLCVVSLFYGTGLGV. Over 259 to 271 the chain is Extracellular; it reads YLSSAVTHSSQSS. Residues 272 to 292 form a helical membrane-spanning segment; sequence STASVMYAMVTPMLNPFIYSL. The Cytoplasmic segment spans residues 293–312; it reads RNKDVKGALERLLSRADSCP.

This sequence belongs to the G-protein coupled receptor 1 family. Nasal olfactory epithelium.

Its subcellular location is the cell membrane. Functionally, odorant receptor. Selectively activated by androstenone and the related odorous steroid androstadienone. This is Olfactory receptor 7D4 (OR7D4) from Homo sapiens (Human).